A 159-amino-acid chain; its full sequence is Cyclic pyranopterin monophosphate synthase (159 aa).

Residues 76–78 and 114–115 each bind substrate; these read LCH and ME. The active site involves Asp-129.

It belongs to the MoaC family. As to quaternary structure, homohexamer; trimer of dimers.

The enzyme catalyses (8S)-3',8-cyclo-7,8-dihydroguanosine 5'-triphosphate = cyclic pyranopterin phosphate + diphosphate. It functions in the pathway cofactor biosynthesis; molybdopterin biosynthesis. Functionally, catalyzes the conversion of (8S)-3',8-cyclo-7,8-dihydroguanosine 5'-triphosphate to cyclic pyranopterin monophosphate (cPMP). The chain is Cyclic pyranopterin monophosphate synthase from Shewanella oneidensis (strain ATCC 700550 / JCM 31522 / CIP 106686 / LMG 19005 / NCIMB 14063 / MR-1).